Here is a 117-residue protein sequence, read N- to C-terminus: Immunoglobulin heavy variable 1-69 (117 aa).

Residues 1–19 (MDWTWRFLFVVAAATGVQS) form the signal peptide. Position 20 is a pyrrolidone carboxylic acid (glutamine 20). The framework-1 stretch occupies residues 20–44 (QVQLVQSGAEVKKPGSSVKVSCKAS). One can recognise an Ig-like domain in the interval 20–117 (QVQLVQSGAE…EDTAVYYCAR (98 aa)). Residues cysteine 41 and cysteine 115 are joined by a disulfide bond. The segment at 45–52 (GGTFSSYA) is complementarity-determining-1. The tract at residues 53–69 (ISWVRQAPGQGLEWMGG) is framework-2. The interval 70 to 77 (IIPIFGTA) is complementarity-determining-2. The interval 78-115 (NYAQKFQGRVTITADKSTSTAYMELSSLRSEDTAVYYC) is framework-3. The segment at 116–117 (AR) is complementarity-determining-3.

Immunoglobulins are composed of two identical heavy chains and two identical light chains; disulfide-linked.

Its subcellular location is the secreted. It is found in the cell membrane. V region of the variable domain of immunoglobulin heavy chains that participates in the antigen recognition. Immunoglobulins, also known as antibodies, are membrane-bound or secreted glycoproteins produced by B lymphocytes. In the recognition phase of humoral immunity, the membrane-bound immunoglobulins serve as receptors which, upon binding of a specific antigen, trigger the clonal expansion and differentiation of B lymphocytes into immunoglobulins-secreting plasma cells. Secreted immunoglobulins mediate the effector phase of humoral immunity, which results in the elimination of bound antigens. The antigen binding site is formed by the variable domain of one heavy chain, together with that of its associated light chain. Thus, each immunoglobulin has two antigen binding sites with remarkable affinity for a particular antigen. The variable domains are assembled by a process called V-(D)-J rearrangement and can then be subjected to somatic hypermutations which, after exposure to antigen and selection, allow affinity maturation for a particular antigen. This chain is Immunoglobulin heavy variable 1-69, found in Homo sapiens (Human).